Here is a 731-residue protein sequence, read N- to C-terminus: Pre-B-cell leukemia transcription factor-interacting protein 1 (731 aa).

Residues 1–10 are compositionally biased toward polar residues; it reads MASCPDSDNS. Positions 1–155 are disordered; the sequence is MASCPDSDNS…SSSDDDTDVD (155 aa). S43 is subject to Phosphoserine. 2 stretches are compositionally biased toward polar residues: residues 62-75 and 121-132; these read LFQT…SILT and LEGQSPPQSLPS. Phosphoserine is present on residues S129, S146, S147, and S148. T152 is subject to Phosphothreonine. A coiled-coil region spans residues 270 to 348; sequence LLLDKLAKEN…QGLEADCVRG (79 aa). Disordered regions lie at residues 354–377, 447–572, and 698–731; these read LSGG…QEPE, GQDP…DPLP, and LKKR…HHRG. Over residues 364-375 the composition is skewed to basic and acidic residues; the sequence is KAIREQGPREQE. Positions 377 to 417 form a coiled coil; the sequence is ELSFLKQKEQLEAEAQALRQELERQRRLLGSVQQDLERSLQ. 3 stretches are compositionally biased toward basic and acidic residues: residues 472–499, 508–543, and 551–569; these read WSGK…ESGR, QEDR…EPPR, and SGEK…DSHD. Residues 485–505 carry the Nuclear localization signal motif; it reads RKAEHWKHKKEESGRERKKNW. The residue at position 567 (S567) is a Phosphoserine. The Nuclear localization signal signature appears at 695–720; it reads DKALKKRSGKKDKHSQSPRAAGPREG. A compositionally biased stretch (basic residues) spans 698–707; that stretch reads LKKRSGKKDK.

As to quaternary structure, interacts with TEX11. Interacts with ESR1, PBX1, PBX2 and PBX3. As to expression, expressed in early hematopoietic precursors.

Its subcellular location is the cytoplasm. It is found in the cytoskeleton. The protein resides in the nucleus. Functionally, regulator of pre-B-cell leukemia transcription factors (BPXs) function. Inhibits the binding of PBX1-HOX complex to DNA and blocks the transcriptional activity of E2A-PBX1. Tethers estrogen receptor-alpha (ESR1) to microtubules and allows them to influence estrogen receptors-alpha signaling. This Homo sapiens (Human) protein is Pre-B-cell leukemia transcription factor-interacting protein 1 (PBXIP1).